A 60-amino-acid polypeptide reads, in one-letter code: UPF0337 protein asr4653 (60 aa).

It belongs to the UPF0337 (CsbD) family.

This Nostoc sp. (strain PCC 7120 / SAG 25.82 / UTEX 2576) protein is UPF0337 protein asr4653.